A 157-amino-acid polypeptide reads, in one-letter code: Small ribosomal subunit protein uS7 (157 aa).

The protein belongs to the universal ribosomal protein uS7 family. As to quaternary structure, part of the 30S ribosomal subunit. Contacts proteins S9 and S11.

Its function is as follows. One of the primary rRNA binding proteins, it binds directly to 16S rRNA where it nucleates assembly of the head domain of the 30S subunit. Is located at the subunit interface close to the decoding center, probably blocks exit of the E-site tRNA. The sequence is that of Small ribosomal subunit protein uS7 from Francisella tularensis subsp. holarctica (strain OSU18).